Consider the following 208-residue polypeptide: Probable nicotinate-nucleotide adenylyltransferase (208 aa).

Belongs to the NadD family.

The enzyme catalyses nicotinate beta-D-ribonucleotide + ATP + H(+) = deamido-NAD(+) + diphosphate. The protein operates within cofactor biosynthesis; NAD(+) biosynthesis; deamido-NAD(+) from nicotinate D-ribonucleotide: step 1/1. Catalyzes the reversible adenylation of nicotinate mononucleotide (NaMN) to nicotinic acid adenine dinucleotide (NaAD). The protein is Probable nicotinate-nucleotide adenylyltransferase of Trichormus variabilis (strain ATCC 29413 / PCC 7937) (Anabaena variabilis).